Consider the following 329-residue polypeptide: DNA-directed RNA polymerase subunit alpha (329 aa).

The alpha N-terminal domain (alpha-NTD) stretch occupies residues 1–235 (MLGSVTDFLK…EQLDAFVDLR (235 aa)). An alpha C-terminal domain (alpha-CTD) region spans residues 249–329 (FDPILLRPVD…NWPPASLADN (81 aa)).

This sequence belongs to the RNA polymerase alpha chain family. Homodimer. The RNAP catalytic core consists of 2 alpha, 1 beta, 1 beta' and 1 omega subunit. When a sigma factor is associated with the core the holoenzyme is formed, which can initiate transcription.

It catalyses the reaction RNA(n) + a ribonucleoside 5'-triphosphate = RNA(n+1) + diphosphate. In terms of biological role, DNA-dependent RNA polymerase catalyzes the transcription of DNA into RNA using the four ribonucleoside triphosphates as substrates. The chain is DNA-directed RNA polymerase subunit alpha from Tolumonas auensis (strain DSM 9187 / NBRC 110442 / TA 4).